Here is a 57-residue protein sequence, read N- to C-terminus: UPF0391 membrane protein RB0084 (57 aa).

Transmembrane regions (helical) follow at residues 4 to 24 and 33 to 53; these read WALIFFVISLIAGFLGFSGVS and ILFYIAVIIFLVFLVLALAVG.

Belongs to the UPF0391 family.

It localises to the cell membrane. This Rhizobium meliloti (strain 1021) (Ensifer meliloti) protein is UPF0391 membrane protein RB0084.